Reading from the N-terminus, the 73-residue chain is UPF0270 protein PMI2817 (73 aa).

This sequence belongs to the UPF0270 family.

The chain is UPF0270 protein PMI2817 from Proteus mirabilis (strain HI4320).